The primary structure comprises 405 residues: MRDTYVLSGARLATMEAEGSYGLVEDGAIAIQGDEILWCGARGALPDTYAACPSTDLNGRLVTPAFIDCHTHIVFGGDRAGEFEMRLEGATYEEVAKAGGGIVSTVTATRAASLDALVTGALPRLDALIAEGVSTVEVKSGYGLDRETELNMLRAARRLAEHRDVTVKTTFLGAHAVPAEYAGRADAYLDEVCLPTLRAAHAEGLVDAVDGFCEGIAFSAAQIAKVFDVAAELGLPVKLHAEQLSHQGGTKLAAERGALSVDHVEYATEADARAMAASGSVAVLLPGAFYTIRETQVPPVAEFRMHGVPMALATDCNPGSSPLTSLLLTLNMGCTLFRLTPEEALAGVTRNAARALGMQDRGRIAPGLRADLAVWDVSRPAELAYRIGFNPLYARVMGGKMEVRT.

Residues histidine 70 and histidine 72 each coordinate Fe(3+). Residues histidine 70 and histidine 72 each coordinate Zn(2+). 4-imidazolone-5-propanoate-binding residues include arginine 79, tyrosine 142, and histidine 175. Tyrosine 142 contacts N-formimidoyl-L-glutamate. Histidine 240 is a binding site for Fe(3+). Histidine 240 is a binding site for Zn(2+). Residue glutamine 243 coordinates 4-imidazolone-5-propanoate. Residue aspartate 315 participates in Fe(3+) binding. Aspartate 315 is a binding site for Zn(2+). N-formimidoyl-L-glutamate-binding residues include asparagine 317 and glycine 319. Serine 320 contacts 4-imidazolone-5-propanoate.

It belongs to the metallo-dependent hydrolases superfamily. HutI family. It depends on Zn(2+) as a cofactor. Fe(3+) is required as a cofactor.

It localises to the cytoplasm. It carries out the reaction 4-imidazolone-5-propanoate + H2O = N-formimidoyl-L-glutamate. Its pathway is amino-acid degradation; L-histidine degradation into L-glutamate; N-formimidoyl-L-glutamate from L-histidine: step 3/3. Its function is as follows. Catalyzes the hydrolytic cleavage of the carbon-nitrogen bond in imidazolone-5-propanoate to yield N-formimidoyl-L-glutamate. It is the third step in the universal histidine degradation pathway. In Ruegeria sp. (strain TM1040) (Silicibacter sp.), this protein is Imidazolonepropionase.